The sequence spans 144 residues: uncharacterized protein (144 aa).

A signal peptide spans 1-23 (MRKILLFATVIGFLIMVSGTLSY).

This is an uncharacterized protein from Archaeoglobus fulgidus (strain ATCC 49558 / DSM 4304 / JCM 9628 / NBRC 100126 / VC-16).